The primary structure comprises 268 residues: Shikimate dehydrogenase (NADP(+)) (268 aa).

Residues 13-15 (SLS) and Thr-60 each bind shikimate. Residue Lys-64 is the Proton acceptor of the active site. An NADP(+)-binding site is contributed by Glu-76. 2 residues coordinate shikimate: Asn-85 and Asp-100. NADP(+) contacts are provided by residues 124–128 (GAGGA), 148–153 (NRTMAR), and Ile-209. Residue Tyr-211 participates in shikimate binding. Gly-232 provides a ligand contact to NADP(+).

It belongs to the shikimate dehydrogenase family. In terms of assembly, homodimer.

The catalysed reaction is shikimate + NADP(+) = 3-dehydroshikimate + NADPH + H(+). Its pathway is metabolic intermediate biosynthesis; chorismate biosynthesis; chorismate from D-erythrose 4-phosphate and phosphoenolpyruvate: step 4/7. Involved in the biosynthesis of the chorismate, which leads to the biosynthesis of aromatic amino acids. Catalyzes the reversible NADPH linked reduction of 3-dehydroshikimate (DHSA) to yield shikimate (SA). This chain is Shikimate dehydrogenase (NADP(+)), found in Staphylococcus aureus (strain MRSA252).